The following is a 92-amino-acid chain: Small ribosomal subunit protein uS19 (92 aa).

The protein belongs to the universal ribosomal protein uS19 family.

In terms of biological role, protein S19 forms a complex with S13 that binds strongly to the 16S ribosomal RNA. The sequence is that of Small ribosomal subunit protein uS19 from Corynebacterium diphtheriae (strain ATCC 700971 / NCTC 13129 / Biotype gravis).